Consider the following 803-residue polypeptide: Ubiquitin carboxyl-terminal hydrolase 45 (803 aa).

The segment at 1-34 (MRLKDPFSLKTADMTKRSNKPKKPRDEDSSDEVG) is disordered. A UBP-type zinc finger spans residues 36–153 (LTCQHVSRAV…QTLDFLQKQS (118 aa)). Positions 38, 40, 62, 65, 85, 88, 93, 100, 104, 113, 126, and 129 each coordinate Zn(2+). The region spanning 192-802 (KGINNLGNTC…QAYLLFYEEL (611 aa)) is the USP domain. Catalysis depends on cysteine 201, which acts as the Nucleophile. The tract at residues 394 to 554 (PTNPARLGKS…LPSIRPQQGG (161 aa)) is disordered. The span at 403–417 (SGREQDSLTSHDDSL) shows a compositional bias: basic and acidic residues. Polar residues-rich tracts occupy residues 419 to 440 (AHSQANRNSRRLSGQKLQSRHS) and 469 to 480 (SYRTDTMGSQSD). Low complexity predominate over residues 502-531 (SEWSPRIPSVSSHSSTSDKTSITTTLSTTT). A compositionally biased stretch (polar residues) spans 532–545 (HNPSLKSNPSSTPL). Histidine 739 (proton acceptor) is an active-site residue.

Belongs to the peptidase C19 family. In terms of tissue distribution, retina.

The protein resides in the photoreceptor inner segment. It is found in the cytoplasm. The protein localises to the nucleus. The catalysed reaction is Thiol-dependent hydrolysis of ester, thioester, amide, peptide and isopeptide bonds formed by the C-terminal Gly of ubiquitin (a 76-residue protein attached to proteins as an intracellular targeting signal).. Functionally, catalyzes the deubiquitination of SPDL1. Plays a role in the repair of UV-induced DNA damage via deubiquitination of ERCC1, promoting its recruitment to DNA damage sites. May be involved in the maintenance of photoreceptor function. May play a role in normal retinal development. The polypeptide is Ubiquitin carboxyl-terminal hydrolase 45 (Danio rerio (Zebrafish)).